The sequence spans 178 residues: Beta-lytic metalloendopeptidase (178 aa).

Cysteines 65 and 111 form a disulfide. Positions 120 and 122 each coordinate Zn(2+). Cysteine 155 and cysteine 168 are disulfide-bonded.

It belongs to the peptidase M23A family. The cofactor is Zn(2+).

The enzyme catalyses Cleavage of N-acetylmuramoyl-|-Ala, and of the insulin B chain at 23-Gly-|-Phe-24 &gt; 18-Val-|-Cys(SO3H).. The sequence is that of Beta-lytic metalloendopeptidase from Lysobacter enzymogenes.